The following is a 527-amino-acid chain: Peptide chain release factor 3 (527 aa).

A tr-type G domain is found at 9 to 278; that stretch reads NKRRTFAIIS…GLTQWAPKPQ (270 aa). GTP-binding positions include 18–25, 86–90, and 140–143; these read SHPDAGKT, DTPGH, and NKLD.

The protein belongs to the TRAFAC class translation factor GTPase superfamily. Classic translation factor GTPase family. PrfC subfamily.

It is found in the cytoplasm. Increases the formation of ribosomal termination complexes and stimulates activities of RF-1 and RF-2. It binds guanine nucleotides and has strong preference for UGA stop codons. It may interact directly with the ribosome. The stimulation of RF-1 and RF-2 is significantly reduced by GTP and GDP, but not by GMP. This chain is Peptide chain release factor 3, found in Haemophilus influenzae (strain 86-028NP).